The following is a 62-amino-acid chain: Large ribosomal subunit protein uL30 (62 aa).

The protein belongs to the universal ribosomal protein uL30 family. Part of the 50S ribosomal subunit.

The polypeptide is Large ribosomal subunit protein uL30 (Halalkalibacterium halodurans (strain ATCC BAA-125 / DSM 18197 / FERM 7344 / JCM 9153 / C-125) (Bacillus halodurans)).